The following is a 152-amino-acid chain: Acidic phospholipase A2 (152 aa).

Positions 1-21 (MNPAHLLVLSAVCVSLLGASS) are cleaved as a signal peptide. Positions 22 to 27 (IPPQPL) are excised as a propeptide. 7 disulfides stabilise this stretch: cysteine 38–cysteine 104, cysteine 54–cysteine 151, cysteine 56–cysteine 72, cysteine 71–cysteine 132, cysteine 78–cysteine 125, cysteine 88–cysteine 118, and cysteine 111–cysteine 123. The Ca(2+) site is built by tyrosine 55, glycine 57, and glycine 59. The active site involves histidine 75. Aspartate 76 provides a ligand contact to Ca(2+). The active site involves aspartate 126.

This sequence belongs to the phospholipase A2 family. Group I subfamily. D49 sub-subfamily. Ca(2+) serves as cofactor. In terms of tissue distribution, expressed by the venom gland.

It is found in the secreted. The enzyme catalyses a 1,2-diacyl-sn-glycero-3-phosphocholine + H2O = a 1-acyl-sn-glycero-3-phosphocholine + a fatty acid + H(+). Its function is as follows. PLA2 catalyzes the calcium-dependent hydrolysis of the 2-acyl groups in 3-sn-phosphoglycerides. The polypeptide is Acidic phospholipase A2 (Ophiophagus hannah (King cobra)).